Here is a 308-residue protein sequence, read N- to C-terminus: 34.2 kDa protein in rubredoxin operon (308 aa).

A disulfide bridge connects residues C136 and C139. 268-278 (TNIKGVFAAGD) provides a ligand contact to FAD.

Belongs to the class-II pyridine nucleotide-disulfide oxidoreductase family.

The polypeptide is 34.2 kDa protein in rubredoxin operon (Clostridium pasteurianum).